Reading from the N-terminus, the 491-residue chain is Homeobox protein unplugged (491 aa).

Disordered stretches follow at residues 1-23, 46-69, 124-146, and 227-329; these read MERPALLQNGEHGAVGSLETKTT, SASASIAASPPSPPEDHEQEQEQE, AGKEPSHPHPPPPHALDKSPLPH, and FSPA…RRTA. Over residues 254-264 the composition is skewed to polar residues; it reads GDSSSDISLTL. The span at 305–316 shows a compositional bias: gly residues; that stretch reads GLGGKDSQGNGS. A DNA-binding region (homeobox) is located at residues 323–382; the sequence is SRRRRTAFTSEQLLELEREFHAKKYLSLTERSQIATSLKLSEVQVKIWFQNRRAKWKRVK.

It is found in the nucleus. Its function is as follows. Plays a regulatory role in neural branching of the tracheae: segment-specific aspects of these neural branching patterns appear to be generated by homeotic regulation of expression. The sequence is that of Homeobox protein unplugged from Drosophila pseudoobscura pseudoobscura (Fruit fly).